The chain runs to 157 residues: MATPPKRRALDTVGEKVLRYEAFISDVLQRDLQKVLDHRDKVYEQLSVYLQLRNVIERLQETNHSELYMQVDLGCNFFVDTMVPDTSRIYVALGYGFFLELTLAEALKFIDRKSSLLTELSDSLTKDSMNIKANIHMMLEGLRELQGLQNFPEPSPH.

This sequence belongs to the UXT family. As to quaternary structure, homohexamer. Component of the PAQosome complex which is responsible for the biogenesis of several protein complexes and which consists of R2TP complex members RUVBL1, RUVBL2, RPAP3 and PIH1D1, URI complex members PFDN2, PFDN6, PDRG1, UXT and URI1 as well as ASDURF, POLR2E and DNAAF10/WDR92. Interacts with LRPPRC. Interacts with androgen receptor AR (via N-terminus). Interacts with estrogen receptor ESR1; the interaction relocalizes ESR1 to the cytoplasm. In the nucleus, interacts specifically with RELA (via RHD domain) and forms a dynamic complex with NF-kappa-B and is recruited to the NF-kappa-B enhanceosome upon stimulation. Interacts with MECOM. Interacts with URI1.

It localises to the cytoplasm. Its subcellular location is the nucleus. It is found in the cytoskeleton. The protein localises to the microtubule organizing center. The protein resides in the centrosome. It localises to the spindle pole. Involved in gene transcription regulation. Acts in concert with the corepressor URI1 to regulate androgen receptor AR-mediated transcription. Together with URI1, associates with chromatin to the NKX3-1 promoter region. Negatively regulates the transcriptional activity of the estrogen receptor ESR1 by inducing its translocation into the cytoplasm. May act as nuclear chaperone that facilitates the formation of the NF-kappa-B enhanceosome and thus positively regulates NF-kappa-B transcription activity. Potential component of mitochondrial-associated LRPPRC, a multidomain organizer that potentially integrates mitochondria and the microtubular cytoskeleton with chromosome remodeling. Increasing concentrations of UXT contributes to progressive aggregation of mitochondria and cell death potentially through its association with LRPPRC. Suppresses cell transformation and it might mediate this function by interaction and inhibition of the biological activity of cell proliferation and survival stimulatory factors like MECOM. In Rattus norvegicus (Rat), this protein is Protein UXT (Uxt).